A 156-amino-acid polypeptide reads, in one-letter code: Ribosome maturation factor RimP (156 aa).

Belongs to the RimP family.

It is found in the cytoplasm. Required for maturation of 30S ribosomal subunits. The sequence is that of Ribosome maturation factor RimP from Oceanobacillus iheyensis (strain DSM 14371 / CIP 107618 / JCM 11309 / KCTC 3954 / HTE831).